We begin with the raw amino-acid sequence, 207 residues long: Thiamine-phosphate synthase (207 aa).

4-amino-2-methyl-5-(diphosphooxymethyl)pyrimidine-binding positions include 36-40 and Asp-68; that span reads QMRIK. Positions 69 and 88 each coordinate Mg(2+). Ser-106 is a binding site for 4-amino-2-methyl-5-(diphosphooxymethyl)pyrimidine. 132 to 134 provides a ligand contact to 2-[(2R,5Z)-2-carboxy-4-methylthiazol-5(2H)-ylidene]ethyl phosphate; the sequence is TKT. 4-amino-2-methyl-5-(diphosphooxymethyl)pyrimidine is bound at residue Lys-135. 2-[(2R,5Z)-2-carboxy-4-methylthiazol-5(2H)-ylidene]ethyl phosphate contacts are provided by residues Gly-162 and 182 to 183; that span reads IS.

Belongs to the thiamine-phosphate synthase family. It depends on Mg(2+) as a cofactor.

It catalyses the reaction 2-[(2R,5Z)-2-carboxy-4-methylthiazol-5(2H)-ylidene]ethyl phosphate + 4-amino-2-methyl-5-(diphosphooxymethyl)pyrimidine + 2 H(+) = thiamine phosphate + CO2 + diphosphate. The catalysed reaction is 2-(2-carboxy-4-methylthiazol-5-yl)ethyl phosphate + 4-amino-2-methyl-5-(diphosphooxymethyl)pyrimidine + 2 H(+) = thiamine phosphate + CO2 + diphosphate. It carries out the reaction 4-methyl-5-(2-phosphooxyethyl)-thiazole + 4-amino-2-methyl-5-(diphosphooxymethyl)pyrimidine + H(+) = thiamine phosphate + diphosphate. It participates in cofactor biosynthesis; thiamine diphosphate biosynthesis; thiamine phosphate from 4-amino-2-methyl-5-diphosphomethylpyrimidine and 4-methyl-5-(2-phosphoethyl)-thiazole: step 1/1. Condenses 4-methyl-5-(beta-hydroxyethyl)thiazole monophosphate (THZ-P) and 2-methyl-4-amino-5-hydroxymethyl pyrimidine pyrophosphate (HMP-PP) to form thiamine monophosphate (TMP). This chain is Thiamine-phosphate synthase, found in Pyrococcus furiosus (strain ATCC 43587 / DSM 3638 / JCM 8422 / Vc1).